Reading from the N-terminus, the 343-residue chain is NADH-ubiquinone oxidoreductase chain 2 (343 aa).

Transmembrane regions (helical) follow at residues 1-21 (MNPMSWLIITTSIALSTTMIT), 59-81 (YYLIQTMASTSMLFAATTNALNT), 96-116 (TIITLALMMKMAAAPFHSWLP), 150-170 (NITLILLSAMLSITMGGLGSL), 178-198 (LMAFSSIAHTGWIMATITMAP), 200-220 (ISTLTFTIYIMTTIPTFLLIN), 241-261 (MTILSMTILSMGGLPPLSGFM), and 270-290 (LISMNMITEATLMAMASLLSL).

The protein belongs to the complex I subunit 2 family.

It is found in the mitochondrion inner membrane. It carries out the reaction a ubiquinone + NADH + 5 H(+)(in) = a ubiquinol + NAD(+) + 4 H(+)(out). Functionally, core subunit of the mitochondrial membrane respiratory chain NADH dehydrogenase (Complex I) that is believed to belong to the minimal assembly required for catalysis. Complex I functions in the transfer of electrons from NADH to the respiratory chain. The immediate electron acceptor for the enzyme is believed to be ubiquinone. In Lycodon semicarinatus (Ryukyu odd-tooth snake), this protein is NADH-ubiquinone oxidoreductase chain 2 (MT-ND2).